We begin with the raw amino-acid sequence, 189 residues long: Shikimate kinase (189 aa).

Residue 22–27 participates in ATP binding; it reads ASGKST. Position 26 (Ser-26) interacts with Mg(2+). Substrate contacts are provided by Asp-44, Arg-68, and Gly-90. Position 128 (Arg-128) interacts with ATP. A substrate-binding site is contributed by Arg-147.

The protein belongs to the shikimate kinase family. In terms of assembly, monomer. It depends on Mg(2+) as a cofactor.

The protein resides in the cytoplasm. The enzyme catalyses shikimate + ATP = 3-phosphoshikimate + ADP + H(+). It participates in metabolic intermediate biosynthesis; chorismate biosynthesis; chorismate from D-erythrose 4-phosphate and phosphoenolpyruvate: step 5/7. In terms of biological role, catalyzes the specific phosphorylation of the 3-hydroxyl group of shikimic acid using ATP as a cosubstrate. This Synechococcus sp. (strain JA-3-3Ab) (Cyanobacteria bacterium Yellowstone A-Prime) protein is Shikimate kinase.